The following is a 137-amino-acid chain: BolA-like protein 1 (137 aa).

Ser-81 bears the Phosphoserine mark. Positions 114 to 137 are disordered; sequence WRENSQLDTSPPCLGGNKKTLGTP.

This sequence belongs to the BolA/IbaG family. As to quaternary structure, interacts with GLRX5. In terms of tissue distribution, widely expressed.

It localises to the mitochondrion. Its function is as follows. Acts as a mitochondrial iron-sulfur (Fe-S) cluster assembly factor that facilitates (Fe-S) cluster insertion into a subset of mitochondrial proteins. Probably acts together with the monothiol glutaredoxin GLRX5. May protect cells against oxidative stress. This is BolA-like protein 1 from Homo sapiens (Human).